Consider the following 890-residue polypeptide: Kinesin-like protein KIF20A (890 aa).

Ser2 carries the post-translational modification N-acetylserine. 3 positions are modified to phosphoserine: Ser7, Ser14, and Ser21. The region spanning 64–507 (KVKVYLRVRP…AKFSAIASQL (444 aa)) is the Kinesin motor domain. Position 160 to 167 (160 to 167 (GVTNSGKT)) interacts with ATP. Ser528 bears the Phosphoserine; by PLK1 mark. Residues Ser532, Ser662, Ser668, Ser685, and Ser825 each carry the phosphoserine modification. Positions 611–762 (LDTQKELLEE…ESLQSAERAC (152 aa)) form a coiled coil. Residues 763–890 (CHSTGAGKLR…LKSGPFGKKY (128 aa)) are globular. A disordered region spans residues 832-865 (TNQENQQPNQQPPGKKPFLRNLLPRTPTCQSSTD). Thr857 carries the phosphothreonine modification. Phosphoserine is present on residues Ser867, Ser878, and Ser883.

The protein belongs to the TRAFAC class myosin-kinesin ATPase superfamily. Kinesin family. Post-translationally, phosphorylated by PLK1 at Ser-528 during mitosis, creating a docking site for PLK1 and recruiting PLK1 at central spindle.

It localises to the golgi apparatus. The protein localises to the cytoplasm. It is found in the cytoskeleton. Its subcellular location is the spindle. In terms of biological role, mitotic kinesin required for chromosome passenger complex (CPC)-mediated cytokinesis. Following phosphorylation by PLK1, involved in recruitment of PLK1 to the central spindle. Interacts with guanosine triphosphate (GTP)-bound forms of RAB6A and RAB6B. May act as a motor required for the retrograde RAB6 regulated transport of Golgi membranes and associated vesicles along microtubules. Has a microtubule plus end-directed motility. The polypeptide is Kinesin-like protein KIF20A (KIF20A) (Homo sapiens (Human)).